Here is a 278-residue protein sequence, read N- to C-terminus: Pantothenate synthetase (278 aa).

Residue 27-34 coordinates ATP; that stretch reads MGYLHEGH. The Proton donor role is filled by His-34. Gln-58 provides a ligand contact to (R)-pantoate. Gln-58 is a binding site for beta-alanine. An ATP-binding site is contributed by 144 to 147; the sequence is GQKD. Gln-150 lines the (R)-pantoate pocket. ATP contacts are provided by residues Val-173 and 181 to 184; that span reads MSSR.

This sequence belongs to the pantothenate synthetase family. As to quaternary structure, homodimer.

The protein localises to the cytoplasm. The catalysed reaction is (R)-pantoate + beta-alanine + ATP = (R)-pantothenate + AMP + diphosphate + H(+). The protein operates within cofactor biosynthesis; (R)-pantothenate biosynthesis; (R)-pantothenate from (R)-pantoate and beta-alanine: step 1/1. Catalyzes the condensation of pantoate with beta-alanine in an ATP-dependent reaction via a pantoyl-adenylate intermediate. The protein is Pantothenate synthetase of Roseiflexus castenholzii (strain DSM 13941 / HLO8).